A 717-amino-acid chain; its full sequence is Catalase-peroxidase (717 aa).

Positions 1–20 (MSGKCPVMHGGNTSTGTSNK) are disordered. Residues 11-20 (GNTSTGTSNK) are compositionally biased toward polar residues. Positions 91 to 219 (WHSAGSYRLA…LAAVQMGLIY (129 aa)) form a cross-link, tryptophyl-tyrosyl-methioninium (Trp-Tyr) (with M-245). The active-site Proton acceptor is the H92. Positions 219–245 (YVNPEGVNGQPDPQKTAEQVRETFARM) form a cross-link, tryptophyl-tyrosyl-methioninium (Tyr-Met) (with W-91). Position 260 (H260) interacts with heme b.

It belongs to the peroxidase family. Peroxidase/catalase subfamily. Homodimer or homotetramer. Heme b is required as a cofactor. Formation of the three residue Trp-Tyr-Met cross-link is important for the catalase, but not the peroxidase activity of the enzyme.

The enzyme catalyses H2O2 + AH2 = A + 2 H2O. The catalysed reaction is 2 H2O2 = O2 + 2 H2O. Functionally, bifunctional enzyme with both catalase and broad-spectrum peroxidase activity. In Chromohalobacter salexigens (strain ATCC BAA-138 / DSM 3043 / CIP 106854 / NCIMB 13768 / 1H11), this protein is Catalase-peroxidase.